The following is a 339-amino-acid chain: Heat-inducible transcription repressor HrcA (339 aa).

Belongs to the HrcA family.

Its function is as follows. Negative regulator of class I heat shock genes (grpE-dnaK-dnaJ and groELS operons). Prevents heat-shock induction of these operons. The polypeptide is Heat-inducible transcription repressor HrcA (Frankia casuarinae (strain DSM 45818 / CECT 9043 / HFP020203 / CcI3)).